Reading from the N-terminus, the 205-residue chain is Holliday junction branch migration complex subunit RuvA (205 aa).

The tract at residues 1 to 64 (MIGRLRGIVL…EDAQLLYGFN (64 aa)) is domain I. The segment at 65–143 (DKQERALFRE…GLNGDLFNQS (79 aa)) is domain II. Positions 144–156 (SDINLPATAKQTT) are flexible linker. A domain III region spans residues 157 to 205 (SDADSEAEAAAALVSLGYKPQEASRMVSKIAKPGADCETLIREALRAVL).

This sequence belongs to the RuvA family. Homotetramer. Forms an RuvA(8)-RuvB(12)-Holliday junction (HJ) complex. HJ DNA is sandwiched between 2 RuvA tetramers; dsDNA enters through RuvA and exits via RuvB. An RuvB hexamer assembles on each DNA strand where it exits the tetramer. Each RuvB hexamer is contacted by two RuvA subunits (via domain III) on 2 adjacent RuvB subunits; this complex drives branch migration. In the full resolvosome a probable DNA-RuvA(4)-RuvB(12)-RuvC(2) complex forms which resolves the HJ.

The protein resides in the cytoplasm. Its function is as follows. The RuvA-RuvB-RuvC complex processes Holliday junction (HJ) DNA during genetic recombination and DNA repair, while the RuvA-RuvB complex plays an important role in the rescue of blocked DNA replication forks via replication fork reversal (RFR). RuvA specifically binds to HJ cruciform DNA, conferring on it an open structure. The RuvB hexamer acts as an ATP-dependent pump, pulling dsDNA into and through the RuvAB complex. HJ branch migration allows RuvC to scan DNA until it finds its consensus sequence, where it cleaves and resolves the cruciform DNA. This chain is Holliday junction branch migration complex subunit RuvA, found in Photorhabdus laumondii subsp. laumondii (strain DSM 15139 / CIP 105565 / TT01) (Photorhabdus luminescens subsp. laumondii).